The primary structure comprises 53 residues: Chlorophyll a-b binding protein 1, chloroplastic (53 aa).

Phenylalanine 18 lines the chlorophyll b pocket. Residues glutamate 48 and histidine 51 each coordinate chlorophyll a. Arginine 53 contacts chlorophyll b.

It belongs to the light-harvesting chlorophyll a/b-binding (LHC) protein family. As to quaternary structure, the LHC complex consists of chlorophyll a-b binding proteins. It depends on Binds at least 14 chlorophylls (8 Chl-a and 6 Chl-b) and carotenoids such as lutein and neoxanthin. as a cofactor. Photoregulated by reversible phosphorylation of its threonine residues.

It is found in the plastid. The protein localises to the chloroplast thylakoid membrane. Functionally, the light-harvesting complex (LHC) functions as a light receptor, it captures and delivers excitation energy to photosystems with which it is closely associated. This is Chlorophyll a-b binding protein 1, chloroplastic from Populus euphratica (Euphrates poplar).